Reading from the N-terminus, the 217-residue chain is Cytochrome c biogenesis ATP-binding export protein CcmA (217 aa).

Residues 6-215 (FSAKNLACVR…HLDQFAVAEE (210 aa)) enclose the ABC transporter domain. 38 to 45 (GPNGSGKS) contributes to the ATP binding site.

Belongs to the ABC transporter superfamily. CcmA exporter (TC 3.A.1.107) family. The complex is composed of two ATP-binding proteins (CcmA) and two transmembrane proteins (CcmB).

Its subcellular location is the cell inner membrane. The catalysed reaction is heme b(in) + ATP + H2O = heme b(out) + ADP + phosphate + H(+). Part of the ABC transporter complex CcmAB involved in the biogenesis of c-type cytochromes; once thought to export heme, this seems not to be the case, but its exact role is uncertain. Responsible for energy coupling to the transport system. In Paramagnetospirillum magneticum (strain ATCC 700264 / AMB-1) (Magnetospirillum magneticum), this protein is Cytochrome c biogenesis ATP-binding export protein CcmA.